Consider the following 180-residue polypeptide: ATP synthase subunit delta (180 aa).

This sequence belongs to the ATPase delta chain family. F-type ATPases have 2 components, F(1) - the catalytic core - and F(0) - the membrane proton channel. F(1) has five subunits: alpha(3), beta(3), gamma(1), delta(1), epsilon(1). F(0) has three main subunits: a(1), b(2) and c(10-14). The alpha and beta chains form an alternating ring which encloses part of the gamma chain. F(1) is attached to F(0) by a central stalk formed by the gamma and epsilon chains, while a peripheral stalk is formed by the delta and b chains.

It localises to the cell inner membrane. In terms of biological role, f(1)F(0) ATP synthase produces ATP from ADP in the presence of a proton or sodium gradient. F-type ATPases consist of two structural domains, F(1) containing the extramembraneous catalytic core and F(0) containing the membrane proton channel, linked together by a central stalk and a peripheral stalk. During catalysis, ATP synthesis in the catalytic domain of F(1) is coupled via a rotary mechanism of the central stalk subunits to proton translocation. Its function is as follows. This protein is part of the stalk that links CF(0) to CF(1). It either transmits conformational changes from CF(0) to CF(1) or is implicated in proton conduction. This chain is ATP synthase subunit delta, found in Legionella pneumophila subsp. pneumophila (strain Philadelphia 1 / ATCC 33152 / DSM 7513).